Consider the following 588-residue polypeptide: Aspartate--tRNA ligase (588 aa).

L-aspartate is bound at residue Glu-174. The interval 198 to 201 is aspartate; sequence QLFK. Residue Arg-220 coordinates L-aspartate. Residues 220–222 and Gln-229 each bind ATP; that span reads RDE. Residue His-448 coordinates L-aspartate. Glu-482 lines the ATP pocket. An L-aspartate-binding site is contributed by Arg-489. 534 to 537 is an ATP binding site; it reads GIDR.

This sequence belongs to the class-II aminoacyl-tRNA synthetase family. Type 1 subfamily. Homodimer.

It localises to the cytoplasm. The catalysed reaction is tRNA(Asp) + L-aspartate + ATP = L-aspartyl-tRNA(Asp) + AMP + diphosphate. In terms of biological role, catalyzes the attachment of L-aspartate to tRNA(Asp) in a two-step reaction: L-aspartate is first activated by ATP to form Asp-AMP and then transferred to the acceptor end of tRNA(Asp). This Xanthomonas campestris pv. campestris (strain B100) protein is Aspartate--tRNA ligase.